The sequence spans 253 residues: Triosephosphate isomerase (253 aa).

9–11 (NWK) is a binding site for substrate. H95 acts as the Electrophile in catalysis. E167 functions as the Proton acceptor in the catalytic mechanism. Substrate contacts are provided by residues G173, S213, and 234 to 235 (GG). At S213 the chain carries Phosphoserine.

This sequence belongs to the triosephosphate isomerase family. Homodimer.

The protein resides in the cytoplasm. The enzyme catalyses D-glyceraldehyde 3-phosphate = dihydroxyacetone phosphate. It participates in carbohydrate biosynthesis; gluconeogenesis. It functions in the pathway carbohydrate degradation; glycolysis; D-glyceraldehyde 3-phosphate from glycerone phosphate: step 1/1. Its function is as follows. Involved in the gluconeogenesis. Catalyzes stereospecifically the conversion of dihydroxyacetone phosphate (DHAP) to D-glyceraldehyde-3-phosphate (G3P). The polypeptide is Triosephosphate isomerase (Geobacillus kaustophilus (strain HTA426)).